A 1114-amino-acid chain; its full sequence is Putative surface protein SAV2496/SAV2497 (1114 aa).

The N-terminal stretch at 1–50 is a signal peptide; sequence MRDKKGPVNKRVDFLSNKLNKYSIRKFTVGTASILIGSLMYLGTQQEAEA. 3 disordered regions span residues 76 to 116, 440 to 473, and 496 to 1088; these read TNKD…EDTP, KFNPDLAPGTEKVTREGQKGEKTITTPTLKNPLT, and EYGP…TGLE. Basic and acidic residues-rich tracts occupy residues 96 to 116, 451 to 461, 505 to 523, 554 to 570, and 579 to 589; these read DTIEHEASVKAEDISKKEDTP, KVTREGQKGEK, GHRDEFDPKLPTGEKEEVP, and SIVEKEEIPFEKERKFN. The 83-residue stretch at 419-501 folds into the G5 1 domain; that stretch reads SAKNNNRIRK…NELTEYGPET (83 aa). Residues 547-628 enclose the G5 2 domain; the sequence is YGPVKGDSIV…NELTEYGPET (82 aa). Residues 590 to 604 are compositionally biased toward low complexity; it reads TTTPTLKNPLTGEII. Composition is skewed to basic and acidic residues over residues 605 to 618, 632 to 650, 681 to 697, 706 to 716, 733 to 746, 760 to 778, 809 to 825, 834 to 844, 861 to 874, 918 to 929, and 946 to 965; these read SKGESKEEITKDPI, GHRDEFDPKLPTGEKEEVP, SIVEKEEIPFKKERKFN, KVTREGQKGEK, SIVEKEEIPFEKERKFN, SKGESKEEITKDPV, KVIEEPVDDVIK, and FETKREFNPKLQPGEERVKQ. A G5 3 domain is found at 674-756; the sequence is YGPVKGDSIV…NELTEYGPET (83 aa). One can recognise a G5 4 domain in the interval 802–884; sequence YGPVKGDSIV…NELTEFGGEK (83 aa). In terms of domain architecture, G5 5 spans 930–1012; that stretch reads HGPKTGTPET…DKIVEFGGEK (83 aa). A compositionally biased stretch (polar residues) spans 968-982; the sequence is QPGSKTITTPITVNP. The segment covering 996–1026 has biased composition (basic and acidic residues); the sequence is EITKQPVDKIVEFGGEKPKDPKGPENPEKPS. Residues 1082–1086 carry the LPXTG sorting signal motif; that stretch reads LPKTG. Thr-1085 carries the pentaglycyl murein peptidoglycan amidated threonine modification. A propeptide spans 1086 to 1114 (removed by sortase); that stretch reads GLESTQKGLIFSSIIGIAGLMLLARRRKN.

The protein resides in the secreted. It localises to the cell wall. The chain is Putative surface protein SAV2496/SAV2497 from Staphylococcus aureus (strain Mu50 / ATCC 700699).